An 837-amino-acid chain; its full sequence is Semaphorin-4B (837 aa).

An N-terminal signal peptide occupies residues 1-43 (MLRTAMGLRSWLAAPWGALPPRPPLLLLLLLLLLLQPPPPTWA). Over 44–717 (LSPRISLPLG…WGADRSYWKE (674 aa)) the chain is Extracellular. Residues 47–523 (RISLPLGSEE…SHSGVVQVPM (477 aa)) enclose the Sema domain. 2 N-linked (GlcNAc...) asparagine glycosylation sites follow: Asn-69 and Asn-96. Disulfide bonds link Cys-120–Cys-131 and Cys-149–Cys-158. N-linked (GlcNAc...) asparagine glycosylation is present at Asn-165. Disulfide bonds link Cys-286/Cys-399 and Cys-310/Cys-359. 2 N-linked (GlcNAc...) asparagine glycosylation sites follow: Asn-410 and Asn-525. In terms of domain architecture, PSI spans 525 to 579 (NCSLYRSCGDCLLARDPYCAWSGSSCKHVSLYQPQLATRPWIQDIEGASAKDLCS). 2 disulfide bridges follow: Cys-526–Cys-543 and Cys-611–Cys-656. Residues 604 to 663 (NTVNTLACPLLSNLATRLWLRNGAPVNASASCHVLPTGDLLLVGTQQLGEFQCWSLEEGF) form the Ig-like C2-type domain. The N-linked (GlcNAc...) asparagine glycan is linked to Asn-630. Residues 718–738 (FLVMCTLFVLAVLLPVLFLLY) form a helical membrane-spanning segment. Topologically, residues 739–837 (RHRNSMKVFL…LGSEIRDSVV (99 aa)) are cytoplasmic. Residues 767 to 805 (PETRPLNGLGPPSTPLDHRGYQSLSDSPPGSRVFTESEK) are disordered. Phosphoserine is present on residues Ser-793, Ser-818, and Ser-830.

This sequence belongs to the semaphorin family.

It localises to the membrane. Its function is as follows. Inhibits axonal extension by providing local signals to specify territories inaccessible for growing axons. In Homo sapiens (Human), this protein is Semaphorin-4B.